We begin with the raw amino-acid sequence, 672 residues long: Tubulin--tyrosine ligase-like protein 12 (672 aa).

The 339-residue stretch at 332 to 670 folds into the TTL domain; sequence KIKIFLQIFA…LDEIDPTKVT (339 aa). ATP contacts are provided by residues 480-483, Lys499, and Asp501; that span reads CEYI.

The protein belongs to the tubulin--tyrosine ligase family.

Functionally, regulates microtubule dynamics in uterine muscle cells. This chain is Tubulin--tyrosine ligase-like protein 12, found in Caenorhabditis briggsae.